The chain runs to 592 residues: Vacuolar protein sorting-associated protein 33 (592 aa).

Belongs to the STXBP/unc-18/SEC1 family.

Essential for vacuolar biogenesis, maturation and function. Involved in the sorting of vacuolar proteins from the Golgi apparatus and their targeting to the vacuole. In Schizosaccharomyces pombe (strain 972 / ATCC 24843) (Fission yeast), this protein is Vacuolar protein sorting-associated protein 33 (vps33).